Reading from the N-terminus, the 472-residue chain is SURF6 homolog gldi-11 (472 aa).

Disordered stretches follow at residues 53-73 (LSKK…AKGL), 89-232 (KSKQ…SPEI), 249-350 (KVER…DRAL), and 414-472 (LVKK…GRIL). Residues 95-106 (KVQPQKVVAPVK) show a composition bias toward low complexity. Basic and acidic residues predominate over residues 107–132 (RPADQNKNKEKVVKKDQKKQDKKADS). The segment covering 133–150 (DSEEDDSSDDEEKEETDE) has biased composition (acidic residues). Over residues 151-160 (PVAKKQKKEE) the composition is skewed to basic and acidic residues. Acidic residues-rich tracts occupy residues 161–175 (SSDD…EEPE) and 182–194 (EAED…EEEE). Polar residues predominate over residues 197–210 (SKPNKTVAQSTLKS). A compositionally biased stretch (basic and acidic residues) spans 212–221 (GKIDKEIQKL). The span at 274 to 285 (LKRRESKLKLKQ) shows a compositional bias: basic residues. Over residues 286 to 305 (RRAEEKKGKEAAAQVKKETV) the composition is skewed to basic and acidic residues. Basic residues predominate over residues 414-426 (LVKKNKMKDRRKQ). Residues 427-443 (KWENRENKTEGEKQTKQ) are compositionally biased toward basic and acidic residues. The span at 459–472 (KRKMNKLRNKGRIL) shows a compositional bias: basic residues.

The protein belongs to the SURF6 family.

The protein resides in the nucleus. Its subcellular location is the nucleoplasm. Functionally, binds to both DNA and RNA in vitro, with a stronger binding capacity for RNA. May represent a nucleolar constitutive protein involved in ribosomal biosynthesis or assembly. The chain is SURF6 homolog gldi-11 from Caenorhabditis elegans.